A 507-amino-acid chain; its full sequence is Glycine, alanine and asparagine-rich protein (507 aa).

A signal peptide spans 1 to 17 (MLRVPLLVLCLALSVGA). The stretch at 158–185 (SAQALASATAELQAAQDAYDQASAYAEA) forms a coiled coil. The segment covering 462 to 498 (GNGNGGNGRNGNGGNGRNGNGGNGGNGNGRNGRGGRY) has biased composition (gly residues). The tract at residues 462-507 (GNGNGGNGRNGNGGNGRNGNGGNGGNGNGRNGRGGRYYYGSSDYYY) is disordered.

As to expression, component of the acid-soluble and acid-insoluble organic matrix of calcified shell layers (at protein level).

It is found in the secreted. This is Glycine, alanine and asparagine-rich protein from Haliotis asinina (Donkey's ear abalone).